We begin with the raw amino-acid sequence, 812 residues long: MSEQGDLNQAIAEEGGTEQETATPENGIVKSESLDEEEKLELQRRLEAQNQERRKSKSGAGKGKLTRSLAVCEESSARPGGESLQDQESIHLQLSSFSSLQEEDKSRKDDSEREKEKDKNKDKTSEKPKIRMLSKDCSQEYTDSTGIDLHEFLINTLKNNSRDRMILLKMEQEIIDFIADNNNHYKKFPQMSSYQRMLVHRVAAYFGLDHNVDQTGKSVIINKTSSTRIPEQRFCEHLKDEKGEESQKRFILKRDNSSIDKEDNQQNRMHPFRDDRRSKSIEEREEEYQRVRERIFAHDSVCSQESLFVENSRLLEDSNICNETYKKRQLFRGNRDGSGRTSGSRQSSSENELKWSDHQRAWSSTDSDSSNRNLKPAMTKTASFGGITVLTRGDSTSSTRSTGKLSKAGSESSSSAGSSGSLSRTHPPLQSTPLVSGVAAGSPGCVPYPENGIGGQVAPSSTSYILLPLEAATGIPPGSILLNPHTGQPFVNPDGTPAIYNPPTSQQPLRSAMVGQSQQQPPQQQPSPQPQQQVQPPQPQMAGPLVTQRDDVATQFGQMTLSRQSSGETPEPPSGPVYPSSLMPQPAQQPSYVIASTGQQLPTGGFSGSGPPISQQVLQPPPSPQGFVQQPPPAQMPVYYYPSGQYPTSTTQQYRPMAPVQYNAQRSQQMPQAAQQAGYQPVLSGQQGFQGLIGVQQPPQSQNVINNQQGTPVQSVMVSYPTMSSYQVPMTQGSQGLPQQSYQQPIMLPNQAGQGSLPATGMPVYCNVTPPTPQNNLRLIGPHCPSSTVPVMSASCRTNCASMSNAGWQVKF.

The segment at 1 to 130 (MSEQGDLNQA…KDKTSEKPKI (130 aa)) is disordered. Ser-2 bears the N-acetylserine mark. Residues 9–25 (QAIAEEGGTEQETATPE) are compositionally biased toward low complexity. A coiled-coil region spans residues 32 to 58 (ESLDEEEKLELQRRLEAQNQERRKSKS). A Phosphoserine modification is found at Ser-33. The span at 40-53 (LELQRRLEAQNQER) shows a compositional bias: basic and acidic residues. Position 56 is a phosphoserine (Ser-56). Residues 90–100 (IHLQLSSFSSL) are compositionally biased toward low complexity. The span at 102–130 (EEDKSRKDDSEREKEKDKNKDKTSEKPKI) shows a compositional bias: basic and acidic residues. Ser-134 is subject to Phosphoserine. The region spanning 164 to 227 (RMILLKMEQE…SVIINKTSST (64 aa)) is the R3H domain. Residues 228–300 (RIPEQRFCEH…VRERIFAHDS (73 aa)) enclose the SUZ domain. Residues 246–281 (SQKRFILKRDNSSIDKEDNQQNRMHPFRDDRRSKSI) form a disordered region. At Ser-300 the chain carries Phosphoserine. Disordered regions lie at residues 332–436 (RGNR…PLVS), 485–544 (HTGQ…MAGP), and 561–632 (LSRQ…QQPP). Over residues 339–349 (GRTSGSRQSSS) the composition is skewed to low complexity. A compositionally biased stretch (basic and acidic residues) spans 351 to 360 (NELKWSDHQR). Residues 361-373 (AWSSTDSDSSNRN) are compositionally biased toward polar residues. A phosphoserine mark is found at Ser-363 and Ser-383. Residues 391–423 (TRGDSTSSTRSTGKLSKAGSESSSSAGSSGSLS) are compositionally biased toward low complexity. Ser-562 carries the phosphoserine modification. Positions 582 to 602 (LMPQPAQQPSYVIASTGQQLP) are enriched in polar residues. Residues 619-632 (QPPPSPQGFVQQPP) are compositionally biased toward pro residues. Arg-655 is subject to Asymmetric dimethylarginine.

As to quaternary structure, interacts with CALM1. Phosphorylation at Ser-56 favors interaction with CALM1. In terms of processing, isoform 1 is methylated by CARM1 at Arg-655 in immature thymocytes. As to expression, isoform 2 is expressed in brain. Isoform 1 is present in immature thymocytes (at protein level).

It is found in the cytoplasm. Isoform 2 may act as a competitive inhibitor of calmodulin-dependent enzymes such as calcineurin in neurons. In Homo sapiens (Human), this protein is cAMP-regulated phosphoprotein 21 (ARPP21).